A 116-amino-acid chain; its full sequence is Large ribosomal subunit protein bL17 (116 aa).

It belongs to the bacterial ribosomal protein bL17 family. As to quaternary structure, part of the 50S ribosomal subunit. Contacts protein L32.

This Trichormus variabilis (strain ATCC 29413 / PCC 7937) (Anabaena variabilis) protein is Large ribosomal subunit protein bL17.